A 253-amino-acid chain; its full sequence is Cholesterol ring-cleaving hydrolase IpdB subunit (253 aa).

The protein belongs to the 3-oxoacid CoA-transferase subunit B family. As to quaternary structure, heterotetramer composed of 2 IpdA subunits and 2 IpdB subunits.

The enzyme catalyses (3E)-2-(2-carboxylatoethyl)-3-methyl-6-oxocyclohex-1-ene-1-carboxyl-CoA + H2O = 6-methyl-3,7-dioxodecanedioyl-CoA. The protein operates within steroid metabolism; cholesterol degradation. Functionally, involved in the final steps of cholesterol and steroid degradation. Opens the last steroid ring of cholesterol by catalyzing the hydrolysis of (3E)-2-(2-carboxylatoethyl)-3-methyl-6-oxocyclohex-1-ene-1-carboxyl-CoA (COCHEA-CoA) to 6-methyl-3,7-dioxodecanedioyl-CoA (MeDODA-CoA). This Rhodococcus jostii (strain RHA1) protein is Cholesterol ring-cleaving hydrolase IpdB subunit.